Reading from the N-terminus, the 1083-residue chain is Histone-lysine N-methyltransferase ATX2 (1083 aa).

Positions 77-84 match the Nuclear localization signal motif; it reads HRRPEIVH. A PWWP domain is found at 315-379; that stretch reads PRDIIWAKLT…VKQAVSFLKG (65 aa). The tract at residues 422 to 443 is disordered; the sequence is TDCSERINSGEEDSSNSGDDYT. The 60-residue stretch at 457 to 516 folds into the FYR N-terminal domain; sequence DCLHRIGDLQIINLGRIVTDSEFFKDSKHTWPEGYTATRKFISLKDPNASAMYKMEVLRD. Residues 520-604 form the FYR C-terminal domain; that stretch reads KTRPVFRVTT…PPSKVSQRKY (85 aa). The PHD-type 1 zinc finger occupies 626-677; the sequence is LDKCNVCHMDEEYENNLFLQCDKCRMMVHTRCYGQLEPHNGILWLCNLCRPV. A C2HC pre-PHD-type zinc finger spans residues 682 to 715; the sequence is PPRCCLCPVVGGAMKPTTDGRWAHLACAIWIPET. The extended PHD domain (ePHD) stretch occupies residues 682–807; the sequence is PPRCCLCPVV…RLLSFCKRHR (126 aa). A PHD-type 2 zinc finger spans residues 739-807; it reads LLCSICGVSY…RLLSFCKRHR (69 aa). The SET domain occupies 919-1037; the sequence is KRLAFGKSGI…KWEELTYDYR (119 aa). Residue histidine 929 coordinates S-adenosyl-L-methionine. The O-linked (GlcNAc) serine glycan is linked to serine 968. S-adenosyl-L-methionine contacts are provided by residues tyrosine 975 and 998–999; that span reads NH. Cysteine 1001 serves as a coordination point for Zn(2+). Tyrosine 1036 is a binding site for S-adenosyl-L-methionine. The 17-residue stretch at 1043 to 1059 folds into the Post-SET domain; sequence ERLACYCGFPRCRGVVN. The Zn(2+) site is built by cysteine 1047, cysteine 1049, and cysteine 1054.

It belongs to the class V-like SAM-binding methyltransferase superfamily. Histone-lysine methyltransferase family. TRX/MLL subfamily. Post-translationally, activated via O-glycosylation. In terms of tissue distribution, expressed in roots, leaves and flowers and, to a lower extent, in young seedlings.

The protein resides in the nucleus. It carries out the reaction N(6)-methyl-L-lysyl-[histone] + S-adenosyl-L-methionine = N(6),N(6)-dimethyl-L-lysyl-[histone] + S-adenosyl-L-homocysteine + H(+). Its function is as follows. Histone methyltransferase. Dimethylates 'Lys-4' of histone H3 (H3K4me2). H3 'Lys-4' methylation represents a specific tag for epigenetic transcriptional activation. Methylates only a limited fraction of nucleosomes of target genes (e.g. NAP and XTH33). Involved in epigenetic regulation of the floral repressor FLC and FT to prevent the transition from vegetative to reproductive development. The chain is Histone-lysine N-methyltransferase ATX2 from Arabidopsis thaliana (Mouse-ear cress).